The chain runs to 195 residues: Protein LIGHT-DEPENDENT SHORT HYPOCOTYLS 7 (195 aa).

2 disordered regions span residues 1–41 (MASH…LSRY) and 154–195 (SQAK…NLAS). A compositionally biased stretch (pro residues) spans 21–36 (QPQPQPHQPQSPPNPP). Residues 40–167 (RYESQKRRDW…ARGVPYKKRK (128 aa)) enclose the ALOG domain. Basic residues predominate over residues 162–175 (PYKKRKKRKKRNPM). A Nuclear localization signal motif is present at residues 165-169 (KRKKR). The segment covering 184-195 (TTGTSSSSNLAS) has biased composition (low complexity).

This sequence belongs to the plant homeotic and developmental regulators ALOG protein family.

Its subcellular location is the nucleus. In terms of biological role, probable transcription regulator that acts as a developmental regulator by promoting cell growth in response to light. In Arabidopsis thaliana (Mouse-ear cress), this protein is Protein LIGHT-DEPENDENT SHORT HYPOCOTYLS 7 (LSH7).